The chain runs to 407 residues: Altered inheritance of mitochondria protein 6 (407 aa).

A signal peptide spans Met1–Ala23.

It belongs to the AIM6 family.

The sequence is that of Altered inheritance of mitochondria protein 6 (AIM6) from Zygosaccharomyces rouxii (strain ATCC 2623 / CBS 732 / NBRC 1130 / NCYC 568 / NRRL Y-229).